We begin with the raw amino-acid sequence, 261 residues long: Ribosome biogenesis protein NSA2 (261 aa).

Composition is skewed to basic and acidic residues over residues M1–E22 and L49–K74. A disordered region spans residues M1–E84. The short motif at G15–E22 is the Nuclear localization signal element.

This sequence belongs to the eukaryotic ribosomal protein eS8 family. Ribosome biogenesis protein NSA2 subfamily. As to quaternary structure, component of the pre-66S ribosomal particle. Interacts with NOP7 and RRP1. Interacts with RSA4 (via WD repeats).

It localises to the nucleus. Its subcellular location is the nucleolus. In terms of biological role, involved in the biogenesis of the 60S ribosomal subunit. May play a part in the quality control of pre-60S particles. In Phaeosphaeria nodorum (strain SN15 / ATCC MYA-4574 / FGSC 10173) (Glume blotch fungus), this protein is Ribosome biogenesis protein NSA2 (NSA2).